We begin with the raw amino-acid sequence, 196 residues long: Recombination protein RecR (196 aa).

The C4-type zinc-finger motif lies at 57–72 (CERCNTFTEAPVCSTC). In terms of domain architecture, Toprim spans 80–175 (RQLCVVETPA…SVTRLARGVP (96 aa)).

It belongs to the RecR family.

In terms of biological role, may play a role in DNA repair. It seems to be involved in an RecBC-independent recombinational process of DNA repair. It may act with RecF and RecO. The chain is Recombination protein RecR from Methylibium petroleiphilum (strain ATCC BAA-1232 / LMG 22953 / PM1).